The primary structure comprises 455 residues: Epoxide hydrolase 1 (455 aa).

Residues 1-21 (MWLELVLASLLGFVIYWFVSR) traverse the membrane as a helical; Signal-anchor for type III membrane protein segment. Residues 22-455 (DKEETLPLGD…RKFVSLAELQ (434 aa)) lie on the Cytoplasmic side of the membrane. Residue Asp-226 is the Nucleophile of the active site. The residue at position 295 (Arg-295) is a Dimethylated arginine. Catalysis depends on Tyr-374, which acts as the Proton donor. Residue His-431 is the Proton acceptor of the active site. Lys-439 carries the N6-acetyllysine modification.

This sequence belongs to the peptidase S33 family.

Its subcellular location is the microsome membrane. The protein resides in the endoplasmic reticulum membrane. It catalyses the reaction cis-stilbene oxide + H2O = (1R,2R)-hydrobenzoin. The enzyme catalyses 1-(4-methoxyphenyl)-N-methyl-N-[(3-methyloxetan-3-yl)methyl]methanamine + H2O = 2-{[(4-methoxybenzyl)(methyl)amino]methyl}-2-methylpropane-1,3-diol. The catalysed reaction is 8,9-epoxy-(5Z,11Z,14Z)-eicosatrienoate + H2O = 8,9-dihydroxy-(5Z,11Z,14Z)-eicosatrienoate. It carries out the reaction 11,12-epoxy-(5Z,8Z,14Z)-eicosatrienoate + H2O = 11,12-dihydroxy-(5Z,8Z,14Z)-eicosatrienoate. It catalyses the reaction 2-(5Z,8Z,11Z,14Z-eicosatetraenoyl)-glycerol + H2O = glycerol + (5Z,8Z,11Z,14Z)-eicosatetraenoate + H(+). Inhibited by 10-hydroxystearamide and methoxy-arachidonyl fluorophosphate. Its function is as follows. Biotransformation enzyme that catalyzes the hydrolysis of arene and aliphatic epoxides to less reactive and more water soluble dihydrodiols by the trans addition of water. May play a role in the metabolism of endogenous lipids such as epoxide-containing fatty acids. Metabolizes the abundant endocannabinoid 2-arachidonoylglycerol (2-AG) to free arachidonic acid (AA) and glycerol. Binds 20(S)-hydroxycholesterol (20(S)-OHC). The chain is Epoxide hydrolase 1 from Rattus norvegicus (Rat).